We begin with the raw amino-acid sequence, 307 residues long: Ribulose bisphosphate carboxylase/oxygenase activase, chloroplastic (307 aa).

The N-terminal 46 residues, 1–46, are a transit peptide targeting the chloroplast; that stretch reads MSIPDDKEAGTIDEFLQKEGVLDILQKLDHDLVGLKPVKDRVREIA. Residue 73-80 coordinates ATP; the sequence is GSPGTGKT.

This sequence belongs to the CbxX/CfxQ family. In terms of assembly, forms homooligomers. Forms heterohexameric rings with the plastid-encoded Rca subunit consisting of 3 of each nuclear- and plastidial-encoded subunits that alternate in the ring.

Its subcellular location is the plastid. It localises to the chloroplast. In terms of biological role, required for the expression of ribulose 1,5-bisphosphate carboxylase/oxygenase (RuBisCo). ATPase involved in the activation of red-type RuBisCo, which tends to form inactive complexes with its substrate ribulose 1,5-bisphosphate (RuBP). Catalyzes the release of RuBP from inhibited RuBisCo in an ATP-dependent manner. Activation of RuBisCO involves the ATP-dependent carboxylation of the epsilon-amino group of lysine leading to a carbamate structure. The nuclear-encoded subunit plays a more critical role in activase function than the plastidial-encoded subunit. This is Ribulose bisphosphate carboxylase/oxygenase activase, chloroplastic from Cyanidioschyzon merolae (strain NIES-3377 / 10D) (Unicellular red alga).